Consider the following 723-residue polypeptide: E3 ubiquitin-protein ligase LRSAM1 (723 aa).

6 LRR repeats span residues 30–51 (ADDI…AFAT), 56–77 (QKKV…SCSL), 82–103 (TIKV…LGQL), 105–127 (ALQV…GNLT), 128–149 (QLQT…VGEL), and 151–172 (SLRT…LAHV). The residue at position 234 (serine 234) is a Phosphoserine. 2 coiled-coil regions span residues 254–380 (SDYE…TESL) and 510–562 (ALSS…KPLS). The tract at residues 282-314 (TQLLQQSSSQKDEILQTVKEEQSRLEQGLSEHQ) is disordered. Residues 291 to 314 (QKDEILQTVKEEQSRLEQGLSEHQ) are compositionally biased toward basic and acidic residues. The SAM domain maps to 569–632 (GMERQLVALL…LRRVQELLDA (64 aa)). A Phosphoserine modification is found at serine 604. A disordered region spans residues 642-665 (PMGEVVTPTAPQEPPESVRPSAPP). Short sequence motifs (PTAP motif) lie at residues 649 to 652 (PTAP) and 661 to 664 (PSAP). The RING-type zinc finger occupies 675–710 (CVVCLEREAQMIFLNCGHVCCCQQCCQPLRTCPLCR).

Interacts with TSG101. Interacts with PHF23. Interacts with FUS. Ubiquitination promoted by PHF23 leads to proteasomal degradation. As to expression, highly expressed in adult spinal cord motoneurons as well as in fetal spinal cord and muscle tissue.

It localises to the cytoplasm. The catalysed reaction is S-ubiquitinyl-[E2 ubiquitin-conjugating enzyme]-L-cysteine + [acceptor protein]-L-lysine = [E2 ubiquitin-conjugating enzyme]-L-cysteine + N(6)-ubiquitinyl-[acceptor protein]-L-lysine.. It functions in the pathway protein modification; protein ubiquitination. Its function is as follows. E3 ubiquitin-protein ligase that mediates monoubiquitination of TSG101 at multiple sites, leading to inactivate the ability of TSG101 to sort endocytic (EGF receptors) and exocytic (HIV-1 viral proteins) cargos. Bacterial recognition protein that defends the cytoplasm from invasive pathogens. Localizes to several intracellular bacterial pathogens and generates the bacteria-associated ubiquitin signal leading to autophagy-mediated intracellular bacteria degradation (xenophagy). The chain is E3 ubiquitin-protein ligase LRSAM1 from Homo sapiens (Human).